The sequence spans 309 residues: Olfactory receptor 5AC2 (309 aa).

Residues 1-27 (MDISEGNKTLVTEFVLTGLTDRPWLHV) are Extracellular-facing. The N-linked (GlcNAc...) asparagine glycan is linked to N7. Residues 28–48 (LFFVVFLVVYLITMVGNLGLI) traverse the membrane as a helical segment. Residues 49-56 (VLIWNDPH) lie on the Cytoplasmic side of the membrane. A helical membrane pass occupies residues 57 to 77 (LHMPMYLFLGGLAFSDACTST). Residues 78–101 (SITPRMLVNFLDKTAMISLAECIT) are Extracellular-facing. C99 and C191 form a disulfide bridge. A helical transmembrane segment spans residues 102-122 (QFYFFASSATTECFLLVMMAY). Over 123–135 (DRYVAICNPLLYP) the chain is Cytoplasmic. Residues 136-156 (VMMSNKLSAQLLSISYVIGFL) form a helical membrane-spanning segment. Topologically, residues 157 to 198 (HPLVHVSLLLRLTFCRFNIIHYFYCEILQLFKISCNGPSINA) are extracellular. The chain crosses the membrane as a helical span at residues 199-219 (LMIFIFGAFIQIPTLMTIIIS). Over 220–239 (YTRVLFDILKKKSEKGRSKA) the chain is Cytoplasmic. Residues 240–260 (FSTCGAHLLSVSLYYGTLIFM) form a helical membrane-spanning segment. The Extracellular segment spans residues 261-273 (YVRPASGLAEDQD). A helical membrane pass occupies residues 274 to 294 (KVYSLFYTIIIPLLNPFIYSL). The Cytoplasmic segment spans residues 295–309 (RNKKVMHALRRVIRK).

The protein belongs to the G-protein coupled receptor 1 family.

Its subcellular location is the cell membrane. Its function is as follows. Odorant receptor. This Homo sapiens (Human) protein is Olfactory receptor 5AC2 (OR5AC2).